The following is a 395-amino-acid chain: Altered inheritance of mitochondria protein 39, mitochondrial (395 aa).

Residues 156 to 176 (QIWSAIFGGIFGVILGYSLIY) form a helical membrane-spanning segment.

The protein belongs to the AIM39 family.

It localises to the mitochondrion membrane. In Saccharomyces cerevisiae (strain JAY291) (Baker's yeast), this protein is Altered inheritance of mitochondria protein 39, mitochondrial (AIM39).